The sequence spans 102 residues: Large ribosomal subunit protein bL21 (102 aa).

It belongs to the bacterial ribosomal protein bL21 family. As to quaternary structure, part of the 50S ribosomal subunit. Contacts protein L20.

Functionally, this protein binds to 23S rRNA in the presence of protein L20. The protein is Large ribosomal subunit protein bL21 of Geobacillus thermodenitrificans (strain NG80-2).